We begin with the raw amino-acid sequence, 260 residues long: MIIVLSPAKSLDYETPAHVESYTKPAFVDDASELIDGLRKLSPQDIATLMDISDPLARLNFQRYADWSPTFTPANAKQAVLAFNGDVYEGFDAKSLSSTDLDYAQQHVRVLSGLYGLLRPLDLLQPYRLEMGTRFANARGKDLYAFWGDRITRALNEQLETRSGAARVLVNCASTEYFKSVKPKLLAAPVITPVFEDWKGGRYKIISFHAKRARGLMARFVVENRITDPNALKEFATEGYAFDAAASNDSTYVYRRRVGE.

The protein belongs to the UPF0246 family.

This is UPF0246 protein Bcen2424_2223 from Burkholderia cenocepacia (strain HI2424).